The sequence spans 655 residues: Integrin beta-5 (655 aa).

The VWFA domain occupies 1 to 234 (DLSLSMKDDL…QLIINAYNSI (234 aa)). At 1 to 575 (DLSLSMKDDL…REPECGNTPN (575 aa)) the chain is on the extracellular side. Mg(2+) is bound by residues serine 3 and serine 5. Positions 5, 8, 9, and 40 each coordinate Ca(2+). A disulfide bridge connects residues cysteine 58 and cysteine 67. 4 residues coordinate Ca(2+): asparagine 98, aspartate 100, proline 102, and glutamate 103. Mg(2+) is bound at residue glutamate 103. Cysteine 115 and cysteine 156 are joined by a disulfide. N-linked (GlcNAc...) asparagine glycosylation occurs at asparagine 203. Glycine 218 lines the Ca(2+) pocket. Intrachain disulfides connect cysteine 257/cysteine 269, cysteine 289/cysteine 317, cysteine 321/cysteine 340, cysteine 332/cysteine 343, cysteine 345/cysteine 354, cysteine 356/cysteine 386, cysteine 369/cysteine 384, cysteine 378/cysteine 389, cysteine 391/cysteine 404, cysteine 406/cysteine 427, cysteine 411/cysteine 425, cysteine 419/cysteine 430, and cysteine 432/cysteine 441. Asparagine 316 carries an N-linked (GlcNAc...) asparagine glycan. I-EGF domains follow at residues 321–355 (CSVGLEPNSARCSGTGTYVCGLCECSPGYLGTRCE), 356–405 (CQDG…PFCE), 406–442 (CDNFSCARNKGVLCSGHGECHCGECKCHAGYIGDNCN), and 443–482 (CSTDISTCRGRDGQICSERGHCLCGQCQCTEPGAFGEMCE). The N-linked (GlcNAc...) asparagine glycan is linked to asparagine 408. Asparagine 442 carries N-linked (GlcNAc...) asparagine glycosylation. 9 disulfides stabilise this stretch: cysteine 443/cysteine 466, cysteine 450/cysteine 464, cysteine 458/cysteine 469, cysteine 471/cysteine 481, cysteine 484/cysteine 487, cysteine 491/cysteine 538, cysteine 497/cysteine 517, cysteine 500/cysteine 513, and cysteine 546/cysteine 570. Asparagine 510 and asparagine 561 each carry an N-linked (GlcNAc...) asparagine glycan. A helical membrane pass occupies residues 576–598 (AMTILLAVVGSILLVGLALLAIW). At 599–655 (KLLVTIHDRREFAKFQSERSRARYEMASNPLYRKPISTHTVDFTFNKFNKSYNGTVD) the chain is on the cytoplasmic side. The residue at position 626 (serine 626) is a Phosphoserine.

The protein belongs to the integrin beta chain family. In terms of assembly, heterodimer of an alpha and a beta subunit. Beta-5 (ITGB5) associates with alpha-V (ITGAV). Interacts with MYO10. Interacts with DAB2. Integrin ITGAV:ITGB5 interacts with FBLN5 (via N-terminus). ITGAV:ITGB5 interacts with CCN3. Interacts with tensin TNS3; TNS3 also interacts with PEAK1, thus acting as an adapter molecule to bridge the association of PEAK1 with ITGB5.

Its subcellular location is the cell membrane. Functionally, integrin alpha-V/beta-5 (ITGAV:ITGB5) is a receptor for fibronectin. It recognizes the sequence R-G-D in its ligand. The protein is Integrin beta-5 (ITGB5) of Papio cynocephalus (Yellow baboon).